The following is a 417-amino-acid chain: COP9 signalosome complex subunit 7a (417 aa).

Residues 2–179 (EQTKALNALE…EMVQINSVAA (178 aa)) form the PCI domain. The disordered stretch occupies residues 240–417 (DEQKGAVPSS…KRGSKRKLTA (178 aa)). The segment covering 263 to 290 (RGGGGGGDGAGAGGSFRGSGYSRGGGLS) has biased composition (gly residues). Composition is skewed to low complexity over residues 291 to 311 (QGYRSSQRGSHQQHQNQSRQQ), 320 to 330 (SNQSGTNSLLT), and 343 to 352 (PSAVSPSAAA). A compositionally biased stretch (gly residues) spans 367 to 379 (METGSGSGSGPLG). Over residues 385 to 405 (DMDDSEEDIDDDTMDLDDEGD) the composition is skewed to acidic residues.

This sequence belongs to the CSN7/EIF3M family. CSN7 subfamily. In terms of assembly, component of the COP9 signalosome (CSN) complex.

It localises to the cytoplasm. The protein resides in the nucleus. Functionally, component of the COP9 signalosome (CSN) complex that acts as an regulator of the ubiquitin (Ubl) conjugation pathway by mediating the deneddylation of the cullin subunit of SCF-type E3 ubiquitin-protein ligase complexes. The CSN complex is involved in the regulation of the circadian clock through its control of the stability of the SCF(FWD1) complex. This chain is COP9 signalosome complex subunit 7a (csn-7a), found in Neurospora crassa (strain ATCC 24698 / 74-OR23-1A / CBS 708.71 / DSM 1257 / FGSC 987).